A 372-amino-acid chain; its full sequence is tRNA-specific 2-thiouridylase MnmA (372 aa).

ATP contacts are provided by residues 16-23 (GMSGGVDS) and methionine 42. An interaction with target base in tRNA region spans residues 102–104 (NPD). Cysteine 107 acts as the Nucleophile in catalysis. A disulfide bridge links cysteine 107 with cysteine 205. Residue glycine 132 participates in ATP binding. The interval 155–157 (KDQ) is interaction with tRNA. The Cysteine persulfide intermediate role is filled by cysteine 205. Residues 317–318 (RY) form an interaction with tRNA region.

This sequence belongs to the MnmA/TRMU family.

The protein localises to the cytoplasm. It carries out the reaction S-sulfanyl-L-cysteinyl-[protein] + uridine(34) in tRNA + AH2 + ATP = 2-thiouridine(34) in tRNA + L-cysteinyl-[protein] + A + AMP + diphosphate + H(+). In terms of biological role, catalyzes the 2-thiolation of uridine at the wobble position (U34) of tRNA, leading to the formation of s(2)U34. The polypeptide is tRNA-specific 2-thiouridylase MnmA (Shewanella frigidimarina (strain NCIMB 400)).